The sequence spans 464 residues: tRNA modification GTPase MnmE (464 aa).

(6S)-5-formyl-5,6,7,8-tetrahydrofolate-binding residues include R27, E90, and K129. The TrmE-type G domain maps to 222-384 (GVALVLAGSV…LYDKIRALIS (163 aa)). Residues 232 to 237 (NAGKSS), 251 to 257 (SSYPGTT), and 276 to 279 (DTAG) each bind GTP. Mg(2+)-binding residues include S236 and T257. K464 contacts (6S)-5-formyl-5,6,7,8-tetrahydrofolate.

It belongs to the TRAFAC class TrmE-Era-EngA-EngB-Septin-like GTPase superfamily. TrmE GTPase family. As to quaternary structure, homodimer. Heterotetramer of two MnmE and two MnmG subunits. Requires K(+) as cofactor.

It localises to the cytoplasm. Functionally, exhibits a very high intrinsic GTPase hydrolysis rate. Involved in the addition of a carboxymethylaminomethyl (cmnm) group at the wobble position (U34) of certain tRNAs, forming tRNA-cmnm(5)s(2)U34. This chain is tRNA modification GTPase MnmE, found in Borreliella burgdorferi (strain ATCC 35210 / DSM 4680 / CIP 102532 / B31) (Borrelia burgdorferi).